The primary structure comprises 285 residues: Troponin T, cardiac muscle (285 aa).

A compositionally biased stretch (acidic residues) spans 1-58 (MSDVEEAVEEYEEQEEAAEEEHEEAVEEEAGGEAEAGEPCTAEDGEEEEGREAEDGPV). Disordered regions lie at residues 1 to 83 (MSDV…GERV) and 111 to 206 (RKKE…EKKK). N-acetylserine is present on Ser-2. Ser-2 is modified (phosphoserine; by CK2). Pro residues predominate over residues 66-77 (RPFMPNLVPPKI). 2 stretches are compositionally biased toward basic and acidic residues: residues 111-171 (RKKE…DEAR) and 190-206 (QTERKSGKRQTEREKKK). The residue at position 191 (Thr-191) is a Phosphothreonine; by PKC/PRKCA. Ser-195 is modified (phosphoserine; by PKC/PRKCA). Thr-200 bears the Phosphothreonine; by PKC/PRKCA and RAF1 mark. Position 281 is a phosphothreonine; by PKC/PRKCA (Thr-281).

The protein belongs to the troponin T family. The N-terminus is blocked. Post-translationally, phosphorylation at Thr-200 by PRKCA induces significant reduction in myofilament calcium sensitivity and actomyosin ATPase activity.

In terms of biological role, troponin T is the tropomyosin-binding subunit of troponin, the thin filament regulatory complex which confers calcium-sensitivity to striated muscle actomyosin ATPase activity. The sequence is that of Troponin T, cardiac muscle (TNNT2) from Bos taurus (Bovine).